The primary structure comprises 146 residues: Putative pre-16S rRNA nuclease (146 aa).

It belongs to the YqgF nuclease family.

The protein resides in the cytoplasm. Functionally, could be a nuclease involved in processing of the 5'-end of pre-16S rRNA. The protein is Putative pre-16S rRNA nuclease of Burkholderia mallei (strain SAVP1).